The following is a 373-amino-acid chain: Peptide chain release factor 2 (373 aa).

N5-methylglutamine is present on Gln252.

The protein belongs to the prokaryotic/mitochondrial release factor family. Methylated by PrmC. Methylation increases the termination efficiency of RF2.

It localises to the cytoplasm. Its function is as follows. Peptide chain release factor 2 directs the termination of translation in response to the peptide chain termination codons UGA and UAA. In Staphylococcus saprophyticus subsp. saprophyticus (strain ATCC 15305 / DSM 20229 / NCIMB 8711 / NCTC 7292 / S-41), this protein is Peptide chain release factor 2.